Reading from the N-terminus, the 250-residue chain is ATP synthase subunit a (250 aa).

The next 6 helical transmembrane spans lie at 29–49, 84–104, 114–134, 143–163, 193–213, and 216–236; these read ASLFMAASAAVAVGFLYFATS, FFPLVFSLFMFVLTANLLGMF, IIVTFALAILVIGTVLVYGFY, VFVPSGVPGILLPLVVSIEII, FVASLGALGAVGVGGAVLPLI, and VALTGLEFLVAFLQAYVFAVL.

Belongs to the ATPase A chain family. In terms of assembly, F-type ATPases have 2 components, CF(1) - the catalytic core - and CF(0) - the membrane proton channel. CF(1) has five subunits: alpha(3), beta(3), gamma(1), delta(1), epsilon(1). CF(0) has three main subunits: a(1), b(2) and c(9-12). The alpha and beta chains form an alternating ring which encloses part of the gamma chain. CF(1) is attached to CF(0) by a central stalk formed by the gamma and epsilon chains, while a peripheral stalk is formed by the delta and b chains.

The protein localises to the cell inner membrane. Key component of the proton channel; it plays a direct role in the translocation of protons across the membrane. The protein is ATP synthase subunit a of Rhizobium leguminosarum bv. trifolii (strain WSM2304).